The sequence spans 256 residues: Thiazole synthase (256 aa).

The active-site Schiff-base intermediate with DXP is Lys96. Residues Gly157, Ala183–Gly184, and Asn205–Thr206 contribute to the 1-deoxy-D-xylulose 5-phosphate site.

Belongs to the ThiG family. Homotetramer. Forms heterodimers with either ThiH or ThiS.

The protein resides in the cytoplasm. The enzyme catalyses [ThiS sulfur-carrier protein]-C-terminal-Gly-aminoethanethioate + 2-iminoacetate + 1-deoxy-D-xylulose 5-phosphate = [ThiS sulfur-carrier protein]-C-terminal Gly-Gly + 2-[(2R,5Z)-2-carboxy-4-methylthiazol-5(2H)-ylidene]ethyl phosphate + 2 H2O + H(+). It functions in the pathway cofactor biosynthesis; thiamine diphosphate biosynthesis. Functionally, catalyzes the rearrangement of 1-deoxy-D-xylulose 5-phosphate (DXP) to produce the thiazole phosphate moiety of thiamine. Sulfur is provided by the thiocarboxylate moiety of the carrier protein ThiS. In vitro, sulfur can be provided by H(2)S. The polypeptide is Thiazole synthase (Bacillus mycoides (strain KBAB4) (Bacillus weihenstephanensis)).